The primary structure comprises 145 residues: Holo-[acyl-carrier-protein] synthase (145 aa).

Residues aspartate 9 and glutamate 59 each contribute to the Mg(2+) site.

The protein belongs to the P-Pant transferase superfamily. AcpS family. The cofactor is Mg(2+).

Its subcellular location is the cytoplasm. It catalyses the reaction apo-[ACP] + CoA = holo-[ACP] + adenosine 3',5'-bisphosphate + H(+). Functionally, transfers the 4'-phosphopantetheine moiety from coenzyme A to a Ser of acyl-carrier-protein. The chain is Holo-[acyl-carrier-protein] synthase from Nocardia farcinica (strain IFM 10152).